A 455-amino-acid chain; its full sequence is UPF0210 protein Teth514_2074 (455 aa).

Belongs to the UPF0210 family. As to quaternary structure, homodimer.

This Thermoanaerobacter sp. (strain X514) protein is UPF0210 protein Teth514_2074.